Consider the following 554-residue polypeptide: Glutamine--tRNA ligase (554 aa).

Positions 34 to 44 match the 'HIGH' region motif; sequence PEPNGYLHIGH. ATP-binding positions include 35-37 and 41-47; these read EPN and HIGHAKS. Residues aspartate 67 and tyrosine 212 each coordinate L-glutamine. ATP is bound by residues threonine 231, 261–262, and 269–271; these read RL and MSK. Positions 268–272 match the 'KMSKS' region motif; it reads VMSKR. An interaction with tRNA region spans residues 317–324; it reads TKQDNTIE.

This sequence belongs to the class-I aminoacyl-tRNA synthetase family. Monomer.

Its subcellular location is the cytoplasm. It carries out the reaction tRNA(Gln) + L-glutamine + ATP = L-glutaminyl-tRNA(Gln) + AMP + diphosphate. The protein is Glutamine--tRNA ligase of Shigella dysenteriae serotype 1 (strain Sd197).